The chain runs to 330 residues: 6-phosphogluconolactonase (330 aa).

Belongs to the cycloisomerase 2 family.

The catalysed reaction is 6-phospho-D-glucono-1,5-lactone + H2O = 6-phospho-D-gluconate + H(+). Its pathway is carbohydrate degradation; pentose phosphate pathway; D-ribulose 5-phosphate from D-glucose 6-phosphate (oxidative stage): step 2/3. Functionally, catalyzes the hydrolysis of 6-phosphogluconolactone to 6-phosphogluconate. The sequence is that of 6-phosphogluconolactonase from Erwinia tasmaniensis (strain DSM 17950 / CFBP 7177 / CIP 109463 / NCPPB 4357 / Et1/99).